Here is a 379-residue protein sequence, read N- to C-terminus: METNSNNFGELQELKDMATLAKLLARAPFLESQYYFRNRAVDSFRKFENDAAVMIQSWFRGCQVRAYMRHLNRVVTIIQKWWRSYLGRKFYQLVVEAAYYTMKMNLYNEMAVRIQRRWRGFRIRKYCFNYYYLKEYLRAVSETNDAIREALEEFAEMKEREERKVLLEREEKQKDYQARKMHYLLSTKQISGIYNSPFREHPDPWELRLQKAKPLGHQKYTAEKGKTSQSPSNWLACTSVHSFPQSESLPPISRKRCQGPFRDINEVLEQRYKPLEPTLRVAEPINHLRLAREAFKQEERMRNVQDKMFLPFSSYHKKEKYIPMIHSSSAYNSDSYGQKHFRSQDSKKWISDKDFQTVLPSFQLFSKYGKLYSKAGEIV.

IQ domains are found at residues 48–77 (ENDA…VVTI), 71–100 (LNRV…AAYY), and 107–136 (YNEM…LKEY).

As to expression, strongly expressed in adult testis but weakly expressed in the spleen and thymus. Strongly expressed in round and elongating spermatids, and weakly or not expressed in spermatozoa.

The protein localises to the cytoplasm. This chain is Spermatogenesis-associated protein 17 (Spata17), found in Mus musculus (Mouse).